A 392-amino-acid chain; its full sequence is Flavohemoprotein (392 aa).

The 139-residue stretch at 1–139 folds into the Globin domain; it reads MLNAEQRAII…LADILIGAEE (139 aa). Heme b is bound at residue H85. Residues Y95 and E138 each act as charge relay system in the active site. A reductase region spans residues 150–392; sequence GGWRGTREFR…EFFGPAAALE (243 aa). One can recognise an FAD-binding FR-type domain in the interval 153-256; it reads RGTREFRLVR…FPPAGDFTLA (104 aa). Residues Y191 and 205–208 contribute to the FAD site; that span reads RNYS. 268 to 273 is an NADP(+) binding site; the sequence is GVGITP. Residue 384 to 387 coordinates FAD; sequence FFGP.

It belongs to the globin family. Two-domain flavohemoproteins subfamily. This sequence in the C-terminal section; belongs to the flavoprotein pyridine nucleotide cytochrome reductase family. Requires heme b as cofactor. FAD serves as cofactor.

It catalyses the reaction 2 nitric oxide + NADPH + 2 O2 = 2 nitrate + NADP(+) + H(+). It carries out the reaction 2 nitric oxide + NADH + 2 O2 = 2 nitrate + NAD(+) + H(+). Is involved in NO detoxification in an aerobic process, termed nitric oxide dioxygenase (NOD) reaction that utilizes O(2) and NAD(P)H to convert NO to nitrate, which protects the bacterium from various noxious nitrogen compounds. Therefore, plays a central role in the inducible response to nitrosative stress. This is Flavohemoprotein from Pseudomonas putida (strain ATCC 47054 / DSM 6125 / CFBP 8728 / NCIMB 11950 / KT2440).